The primary structure comprises 785 residues: Semaphorin-3E (785 aa).

The N-terminal stretch at 1–25 is a signal peptide; it reads MLGRMASAQDLLILALCGLLLELPA. In terms of domain architecture, Sema spans 36 to 520; that stretch reads RLRLSHKELW…TESVIAQVKF (485 aa). Asn48 is a glycosylation site (N-linked (GlcNAc...) asparagine). A disulfide bridge connects residues Cys109 and Cys119. Asn130 carries N-linked (GlcNAc...) asparagine glycosylation. Disulfide bonds link Cys137-Cys146, Cys274-Cys386, Cys298-Cys346, and Cys523-Cys541. N-linked (GlcNAc...) asparagine glycosylation is present at Asn600. Residues 651-740 form the Ig-like C2-type domain; that stretch reads LDAGTYFCQT…EYCEKVWCTD (90 aa). Cysteines 658 and 733 form a disulfide. The disordered stretch occupies residues 744–785; sequence KKLKMSPSKWKYANPQEKRQDQEKKARIRPEHYRLPRNIADS. Basic and acidic residues predominate over residues 759-777; that stretch reads QEKRQDQEKKARIRPEHYR.

The protein belongs to the semaphorin family. As to expression, collapsin-1, -2, -3, and -5 bind to overlapping but distinct axon tracts.

The protein resides in the secreted. Its function is as follows. Plays an important role in signaling via the cell surface receptor PLXND1. Mediates reorganization of the actin cytoskeleton, leading to the retraction of cell projections. Promotes focal adhesion disassembly and inhibits adhesion of endothelial cells to the extracellular matrix. Regulates angiogenesis. Can down-regulate sprouting angiogenesis. Required for normal vascular patterning during embryogenesis. Induces the collapse and paralysis of neuronal growth cones. Plays an important role in ensuring the specificity of synapse formation. The sequence is that of Semaphorin-3E (SEMA3E) from Gallus gallus (Chicken).